The sequence spans 153 residues: 3-hydroxyacyl-[acyl-carrier-protein] dehydratase FabZ (153 aa).

Histidine 57 is a catalytic residue.

The protein belongs to the thioester dehydratase family. FabZ subfamily.

The protein localises to the cytoplasm. The enzyme catalyses a (3R)-hydroxyacyl-[ACP] = a (2E)-enoyl-[ACP] + H2O. Its function is as follows. Involved in unsaturated fatty acids biosynthesis. Catalyzes the dehydration of short chain beta-hydroxyacyl-ACPs and long chain saturated and unsaturated beta-hydroxyacyl-ACPs. This Aeromonas salmonicida (strain A449) protein is 3-hydroxyacyl-[acyl-carrier-protein] dehydratase FabZ.